The sequence spans 449 residues: Xylose isomerase (449 aa).

Catalysis depends on residues His-101 and Asp-104. Mg(2+)-binding residues include Glu-232, Glu-268, His-271, Asp-296, Asp-307, Asp-309, and Asp-340.

It belongs to the xylose isomerase family. In terms of assembly, homotetramer. Requires Mg(2+) as cofactor.

It is found in the cytoplasm. The enzyme catalyses alpha-D-xylose = alpha-D-xylulofuranose. This Bifidobacterium longum (strain DJO10A) protein is Xylose isomerase.